Reading from the N-terminus, the 538-residue chain is Chaperonin GroEL (538 aa).

ATP is bound by residues 29–32, 86–90, glycine 413, 476–478, and aspartate 492; these read TLGP, DGTTT, and NAA.

The protein belongs to the chaperonin (HSP60) family. As to quaternary structure, forms a cylinder of 14 subunits composed of two heptameric rings stacked back-to-back. Interacts with the co-chaperonin GroES.

It is found in the cytoplasm. The enzyme catalyses ATP + H2O + a folded polypeptide = ADP + phosphate + an unfolded polypeptide.. Its function is as follows. Together with its co-chaperonin GroES, plays an essential role in assisting protein folding. The GroEL-GroES system forms a nano-cage that allows encapsulation of the non-native substrate proteins and provides a physical environment optimized to promote and accelerate protein folding. The polypeptide is Chaperonin GroEL (Bacillus sp. (strain PS3)).